A 147-amino-acid chain; its full sequence is Protein BUD31 homolog (147 aa).

The Nuclear localization signal motif lies at 8–12; it reads RRVRK.

The protein belongs to the BUD31 (G10) family. As to quaternary structure, identified in the spliceosome C complex.

It is found in the nucleus. Involved in pre-mRNA splicing process. The sequence is that of Protein BUD31 homolog from Caenorhabditis elegans.